The primary structure comprises 276 residues: NADPH-dependent 7-cyano-7-deazaguanine reductase (276 aa).

Ile-83–Ser-85 lines the substrate pocket. Ser-85–Lys-86 contacts NADPH. Cys-184 acts as the Thioimide intermediate in catalysis. The active-site Proton donor is the Asp-191. Substrate is bound at residue His-223–Glu-224. Residue Arg-252 to Gly-253 participates in NADPH binding.

It belongs to the GTP cyclohydrolase I family. QueF type 2 subfamily. In terms of assembly, homodimer.

The protein resides in the cytoplasm. The catalysed reaction is 7-aminomethyl-7-carbaguanine + 2 NADP(+) = 7-cyano-7-deazaguanine + 2 NADPH + 3 H(+). It participates in tRNA modification; tRNA-queuosine biosynthesis. Its function is as follows. Catalyzes the NADPH-dependent reduction of 7-cyano-7-deazaguanine (preQ0) to 7-aminomethyl-7-deazaguanine (preQ1). This chain is NADPH-dependent 7-cyano-7-deazaguanine reductase, found in Pseudomonas fluorescens (strain Pf0-1).